Consider the following 724-residue polypeptide: Probable protein phosphatase 2C 62 (724 aa).

The tract at residues 357-385 is disordered; that stretch reads DELISTSEATRHSVDEIAQKPIIDTSEKN. Over residues 365 to 374 the composition is skewed to basic and acidic residues; the sequence is ATRHSVDEIA. A PPM-type phosphatase domain is found at 482 to 719; the sequence is DSGFASLQSP…DAVTVIISFV (238 aa). Residues aspartate 514, glycine 515, aspartate 643, and aspartate 710 each coordinate Mn(2+).

It belongs to the PP2C family. Mg(2+) is required as a cofactor. It depends on Mn(2+) as a cofactor.

It carries out the reaction O-phospho-L-seryl-[protein] + H2O = L-seryl-[protein] + phosphate. It catalyses the reaction O-phospho-L-threonyl-[protein] + H2O = L-threonyl-[protein] + phosphate. The chain is Probable protein phosphatase 2C 62 from Arabidopsis thaliana (Mouse-ear cress).